A 247-amino-acid polypeptide reads, in one-letter code: Probable transcriptional regulatory protein Tola_2714 (247 aa).

The tract at residues 1–21 (MAGHSKWANIKHRKAAQDAKR) is disordered.

Belongs to the TACO1 family.

The protein resides in the cytoplasm. The chain is Probable transcriptional regulatory protein Tola_2714 from Tolumonas auensis (strain DSM 9187 / NBRC 110442 / TA 4).